Here is a 152-residue protein sequence, read N- to C-terminus: Coiled-coil domain-containing protein 182 (152 aa).

Positions Ala-46 to Ile-109 form a coiled coil.

The protein is Coiled-coil domain-containing protein 182 (Ccdc182) of Mus musculus (Mouse).